A 237-amino-acid polypeptide reads, in one-letter code: Ribosomal RNA large subunit methyltransferase E (237 aa).

Positions 76, 78, 99, 115, and 139 each coordinate S-adenosyl-L-methionine. The active-site Proton acceptor is the K179.

This sequence belongs to the class I-like SAM-binding methyltransferase superfamily. RNA methyltransferase RlmE family.

Its subcellular location is the cytoplasm. The catalysed reaction is uridine(2552) in 23S rRNA + S-adenosyl-L-methionine = 2'-O-methyluridine(2552) in 23S rRNA + S-adenosyl-L-homocysteine + H(+). Functionally, specifically methylates the uridine in position 2552 of 23S rRNA at the 2'-O position of the ribose in the fully assembled 50S ribosomal subunit. This is Ribosomal RNA large subunit methyltransferase E from Rhodopseudomonas palustris (strain TIE-1).